A 519-amino-acid chain; its full sequence is Maturase K (519 aa).

Belongs to the intron maturase 2 family. MatK subfamily.

It is found in the plastid. The protein resides in the chloroplast. Functionally, usually encoded in the trnK tRNA gene intron. Probably assists in splicing its own and other chloroplast group II introns. The protein is Maturase K of Dioscorea elephantipes (Elephant's foot yam).